Reading from the N-terminus, the 328-residue chain is MSEMLLFEALREGLQEEMDRDPKVLVMGEDVGHYGGSYKVTKGFAEKYGDLRLLDTPIAENSFTGMAIGAAMTGLRPVVEGMNMGFLLLAFNQIANNAGMLHYTSGANFTIPIVIRGPGGVGRQLGAEHSQRLESYFQSVPGLQLVACSTPINAKGLIKSSIRSENPVILFEHVLLYNLKETIPDNEYLVCLEKAEIVRPGTDITILTYSRMRHHVLQATKSLVYKGYDPEIIDIVSLKPVDLGTISTSIKKTHKVLIVEECMRTGGIGASLRATIMEHLFDFLDAPIMCLSSQDVPTPYSGPLEELTVIQPAQIVQAVEQLCNNGNN.

Position 60 (Glu60) interacts with thiamine diphosphate. The K(+) site is built by Ile113, Ile162, and Asn166.

In terms of assembly, heterodimer of an alpha and a beta chain. The cofactor is thiamine diphosphate.

It is found in the plastid. The protein localises to the chloroplast. It catalyses the reaction N(6)-[(R)-lipoyl]-L-lysyl-[protein] + pyruvate + H(+) = N(6)-[(R)-S(8)-acetyldihydrolipoyl]-L-lysyl-[protein] + CO2. Functionally, the pyruvate dehydrogenase complex catalyzes the overall conversion of pyruvate to acetyl-CoA and CO(2). It contains multiple copies of three enzymatic components: pyruvate dehydrogenase (E1), dihydrolipoamide acetyltransferase (E2) and lipoamide dehydrogenase (E3). The protein is Pyruvate dehydrogenase E1 component subunit beta (pdhB) of Staurastrum punctulatum (Green alga).